Reading from the N-terminus, the 186-residue chain is Probable GTP-binding protein EngB (186 aa).

One can recognise an EngB-type G domain in the interval 18-186 (SKKEVCLIGR…LMLKIIDVIS (169 aa)). Residues 26-33 (GRSNVGKS), 52-56 (GRTVT), 69-72 (DLPG), 135-138 (NKID), and 166-168 (ISA) contribute to the GTP site. Residues Ser-33 and Thr-54 each coordinate Mg(2+).

It belongs to the TRAFAC class TrmE-Era-EngA-EngB-Septin-like GTPase superfamily. EngB GTPase family. Mg(2+) serves as cofactor.

Its function is as follows. Necessary for normal cell division and for the maintenance of normal septation. This chain is Probable GTP-binding protein EngB, found in Mycoplasmoides gallisepticum (strain R(low / passage 15 / clone 2)) (Mycoplasma gallisepticum).